The chain runs to 292 residues: MNNYTIKDITRASGGFAMLAVDQREAMRLMFAAAGAKTPVADSVLTDFKVNAAKILSPYASAVLLDQQFCYRQAVEQNAVAKSCAMIVAADDFIPGNGIPVDNVVLDKKINAQAVKRDGAKALKLLVLWRSDEDAQQRLNMVKEFNELCHSNGLLSIIEPVVRPPRCGDKFDREQAIIDAAKELGDSGADLYKVEMPLYGKGARSDLLTASQRLNGHINMPWVILSSGVDEKLFPRAVRVAMEAGASGFLAGRAVWSSVIGLPDTELMLRDVSAPKLQRLGEIVDEMMAKRR.

Lys-193 functions as the Schiff-base intermediate with substrate in the catalytic mechanism.

This sequence belongs to the aldolase LacD family. In terms of assembly, homotetramer.

The enzyme catalyses 6-deoxy-6-sulfo-D-fructose 1-phosphate = (2S)-3-sulfolactaldehyde + dihydroxyacetone phosphate. Cleaves 6-deoxy-6-sulfo-D-fructose 1-phosphate (SFP) to form dihydroxyacetone phosphate (DHAP) and 3-sulfolactaldehyde (SLA). Can also catalyze the reverse reaction. The protein is Sulfofructosephosphate aldolase (yihT) of Salmonella typhimurium (strain LT2 / SGSC1412 / ATCC 700720).